The following is a 153-amino-acid chain: Arginine repressor (153 aa).

It belongs to the ArgR family.

Its subcellular location is the cytoplasm. It participates in amino-acid biosynthesis; L-arginine biosynthesis [regulation]. Its function is as follows. Regulates arginine biosynthesis genes. This is Arginine repressor from Syntrophomonas wolfei subsp. wolfei (strain DSM 2245B / Goettingen).